Here is a 143-residue protein sequence, read N- to C-terminus: Small ribosomal subunit protein uS9 (143 aa).

The disordered stretch occupies residues 124–143; it reads PEPKKFGGKGARARFQKSYR. Residues 134-143 are compositionally biased toward basic residues; it reads ARARFQKSYR.

Belongs to the universal ribosomal protein uS9 family.

The protein is Small ribosomal subunit protein uS9 (RPS16) of Candida glabrata (strain ATCC 2001 / BCRC 20586 / JCM 3761 / NBRC 0622 / NRRL Y-65 / CBS 138) (Yeast).